Consider the following 514-residue polypeptide: 3-octaprenyl-4-hydroxybenzoate carboxy-lyase (514 aa).

Asn-177 lines the Mn(2+) pocket. Prenylated FMN-binding positions include 180–182, 194–196, and 199–200; these read IYR, RWL, and RG. Mn(2+) is bound at residue Glu-243. Asp-314 serves as the catalytic Proton donor.

Belongs to the UbiD family. As to quaternary structure, homohexamer. Prenylated FMN is required as a cofactor. It depends on Mn(2+) as a cofactor.

It localises to the cell membrane. The catalysed reaction is a 4-hydroxy-3-(all-trans-polyprenyl)benzoate + H(+) = a 2-(all-trans-polyprenyl)phenol + CO2. The protein operates within cofactor biosynthesis; ubiquinone biosynthesis. Catalyzes the decarboxylation of 3-octaprenyl-4-hydroxy benzoate to 2-octaprenylphenol, an intermediate step in ubiquinone biosynthesis. The polypeptide is 3-octaprenyl-4-hydroxybenzoate carboxy-lyase (Bordetella petrii (strain ATCC BAA-461 / DSM 12804 / CCUG 43448)).